A 199-amino-acid polypeptide reads, in one-letter code: Elongation factor Ts (199 aa).

The involved in Mg(2+) ion dislocation from EF-Tu stretch occupies residues 82–85 (TDFV).

It belongs to the EF-Ts family.

Its subcellular location is the cytoplasm. Its function is as follows. Associates with the EF-Tu.GDP complex and induces the exchange of GDP to GTP. It remains bound to the aminoacyl-tRNA.EF-Tu.GTP complex up to the GTP hydrolysis stage on the ribosome. The polypeptide is Elongation factor Ts (Leptospira borgpetersenii serovar Hardjo-bovis (strain JB197)).